The chain runs to 525 residues: UPF0288 protein MA_3997 (525 aa).

The protein belongs to the UPF0288 family.

The polypeptide is UPF0288 protein MA_3997 (Methanosarcina acetivorans (strain ATCC 35395 / DSM 2834 / JCM 12185 / C2A)).